The following is a 177-amino-acid chain: Large ribosomal subunit protein uL6 (177 aa).

An N6-acetyllysine modification is found at Lys44.

The protein belongs to the universal ribosomal protein uL6 family. In terms of assembly, part of the 50S ribosomal subunit.

In terms of biological role, this protein binds to the 23S rRNA, and is important in its secondary structure. It is located near the subunit interface in the base of the L7/L12 stalk, and near the tRNA binding site of the peptidyltransferase center. The chain is Large ribosomal subunit protein uL6 from Escherichia coli O139:H28 (strain E24377A / ETEC).